The sequence spans 243 residues: uncharacterized protein (243 aa).

This is an uncharacterized protein from Orgyia pseudotsugata multicapsid polyhedrosis virus (OpMNPV).